A 216-amino-acid polypeptide reads, in one-letter code: Protein Syd (216 aa).

It belongs to the Syd family.

The protein localises to the cell inner membrane. Interacts with the SecY protein in vivo. May bind preferentially to an uncomplexed state of SecY, thus functioning either as a chelating agent for excess SecY in the cell or as a regulatory factor that negatively controls the translocase function. The sequence is that of Protein Syd from Shewanella putrefaciens (strain CN-32 / ATCC BAA-453).